Here is a 333-residue protein sequence, read N- to C-terminus: MEERLVSGEVLGEETALEPSLRPQYLHEYIGQDKIKENLKVFIEAAKLREETLDHVLLYGPPGLGKTTLAVIIANEMGVKLRATSGPALERPGDLAALLTSLEPGDVLFIDEIHRLPRAVEEVLYPAMEDYCLDITIGKGPDARTLRLDLPPFTLVGATTRAGALSAPLRDRFGVISRLEYYHVDQLAQIIERAAAILQIGIEREAALELARRARGTPRIANRLLRRVRDFAQVRGEGGITLPLAVEALERLQVDRLGLDQIDHKLLSAMIEKFAGGPVGLETLAAVIGEEAQTIEEVYEPYLMQIGLLQRTPRGRVVTPAAYTHLGMEVPKR.

Residues methionine 1–tyrosine 182 are large ATPase domain (RuvB-L). Residues leucine 21, arginine 22, glycine 63, lysine 66, threonine 67, threonine 68, glutamate 129–tyrosine 131, arginine 172, tyrosine 182, and arginine 219 contribute to the ATP site. Residue threonine 67 participates in Mg(2+) binding. The interval histidine 183–glutamine 253 is small ATPAse domain (RuvB-S). Residues arginine 256–arginine 333 form a head domain (RuvB-H) region. Arginine 311 and arginine 316 together coordinate DNA.

It belongs to the RuvB family. In terms of assembly, homohexamer. Forms an RuvA(8)-RuvB(12)-Holliday junction (HJ) complex. HJ DNA is sandwiched between 2 RuvA tetramers; dsDNA enters through RuvA and exits via RuvB. An RuvB hexamer assembles on each DNA strand where it exits the tetramer. Each RuvB hexamer is contacted by two RuvA subunits (via domain III) on 2 adjacent RuvB subunits; this complex drives branch migration. In the full resolvosome a probable DNA-RuvA(4)-RuvB(12)-RuvC(2) complex forms which resolves the HJ.

It localises to the cytoplasm. The catalysed reaction is ATP + H2O = ADP + phosphate + H(+). In terms of biological role, the RuvA-RuvB-RuvC complex processes Holliday junction (HJ) DNA during genetic recombination and DNA repair, while the RuvA-RuvB complex plays an important role in the rescue of blocked DNA replication forks via replication fork reversal (RFR). RuvA specifically binds to HJ cruciform DNA, conferring on it an open structure. The RuvB hexamer acts as an ATP-dependent pump, pulling dsDNA into and through the RuvAB complex. RuvB forms 2 homohexamers on either side of HJ DNA bound by 1 or 2 RuvA tetramers; 4 subunits per hexamer contact DNA at a time. Coordinated motions by a converter formed by DNA-disengaged RuvB subunits stimulates ATP hydrolysis and nucleotide exchange. Immobilization of the converter enables RuvB to convert the ATP-contained energy into a lever motion, pulling 2 nucleotides of DNA out of the RuvA tetramer per ATP hydrolyzed, thus driving DNA branch migration. The RuvB motors rotate together with the DNA substrate, which together with the progressing nucleotide cycle form the mechanistic basis for DNA recombination by continuous HJ branch migration. Branch migration allows RuvC to scan DNA until it finds its consensus sequence, where it cleaves and resolves cruciform DNA. In Geobacillus kaustophilus (strain HTA426), this protein is Holliday junction branch migration complex subunit RuvB.